We begin with the raw amino-acid sequence, 172 residues long: Ribosome maturation factor RimM (172 aa).

The region spanning 100 to 172 (PGEYYRVDLV…RIVVDWDPGF (73 aa)) is the PRC barrel domain.

This sequence belongs to the RimM family. In terms of assembly, binds ribosomal protein uS19.

It is found in the cytoplasm. In terms of biological role, an accessory protein needed during the final step in the assembly of 30S ribosomal subunit, possibly for assembly of the head region. Essential for efficient processing of 16S rRNA. May be needed both before and after RbfA during the maturation of 16S rRNA. It has affinity for free ribosomal 30S subunits but not for 70S ribosomes. The polypeptide is Ribosome maturation factor RimM (Methylococcus capsulatus (strain ATCC 33009 / NCIMB 11132 / Bath)).